The primary structure comprises 257 residues: Zinc transporter ZupT (257 aa).

Helical transmembrane passes span 5–25 (LILT…GVIG), 32–52 (VLAF…LMEM), 61–81 (GMSP…YFAL), 109–129 (AILL…ATYV), 137–157 (LGFG…LAVA), 171–191 (ILWA…TWLI), 195–215 (MISP…MVAL), and 236–256 (GVLC…TAGF). Fe(2+)-binding residues include Asn-120 and Glu-123. Residues Glu-123 and His-148 each coordinate Zn(2+). Residues Asn-149, Glu-152, and Glu-181 each coordinate Fe(2+). Residue Glu-152 coordinates Zn(2+).

It belongs to the ZIP transporter (TC 2.A.5) family. ZupT subfamily.

The protein resides in the cell inner membrane. It carries out the reaction Zn(2+)(in) = Zn(2+)(out). Mediates zinc uptake. May also transport other divalent cations. The sequence is that of Zinc transporter ZupT from Enterobacter sp. (strain 638).